A 668-amino-acid chain; its full sequence is Fructose-1,6-bisphosphatase class 3 (668 aa).

Belongs to the FBPase class 3 family. Mn(2+) is required as a cofactor.

It carries out the reaction beta-D-fructose 1,6-bisphosphate + H2O = beta-D-fructose 6-phosphate + phosphate. Its pathway is carbohydrate biosynthesis; gluconeogenesis. The polypeptide is Fructose-1,6-bisphosphatase class 3 (Clostridium botulinum (strain 657 / Type Ba4)).